Consider the following 125-residue polypeptide: UPF0231 protein APL_0968 (125 aa).

This sequence belongs to the UPF0231 family.

This Actinobacillus pleuropneumoniae serotype 5b (strain L20) protein is UPF0231 protein APL_0968.